The following is a 116-amino-acid chain: uncharacterized protein (116 aa).

The chain crosses the membrane as a helical span at residues 20–42 (YLNKYYSVITYFLAFLTKFAILL). Residues 95–116 (IEFQSKSSPVPPASESNKGINE) form a disordered region.

It is found in the membrane. This is an uncharacterized protein from Saccharomyces cerevisiae (strain ATCC 204508 / S288c) (Baker's yeast).